We begin with the raw amino-acid sequence, 91 residues long: Large ribosomal subunit protein uL23 (91 aa).

Belongs to the universal ribosomal protein uL23 family. As to quaternary structure, part of the 50S ribosomal subunit. Contacts protein L29, and trigger factor when it is bound to the ribosome.

In terms of biological role, one of the early assembly proteins it binds 23S rRNA. One of the proteins that surrounds the polypeptide exit tunnel on the outside of the ribosome. Forms the main docking site for trigger factor binding to the ribosome. The sequence is that of Large ribosomal subunit protein uL23 from Staphylococcus haemolyticus (strain JCSC1435).